We begin with the raw amino-acid sequence, 331 residues long: Thiamine-monophosphate kinase (331 aa).

Aspartate 43, threonine 59, threonine 60, and aspartate 61 together coordinate Mg(2+). Histidine 68 serves as a coordination point for substrate. Aspartate 90, aspartate 138, and aspartate 231 together coordinate Mg(2+). 137–138 (GD) lines the ATP pocket. Serine 233 contacts ATP. Residue aspartate 234 coordinates Mg(2+). 2 residues coordinate substrate: glutamate 284 and tryptophan 328.

It belongs to the thiamine-monophosphate kinase family.

It catalyses the reaction thiamine phosphate + ATP = thiamine diphosphate + ADP. Its pathway is cofactor biosynthesis; thiamine diphosphate biosynthesis; thiamine diphosphate from thiamine phosphate: step 1/1. In terms of biological role, catalyzes the ATP-dependent phosphorylation of thiamine-monophosphate (TMP) to form thiamine-pyrophosphate (TPP), the active form of vitamin B1. This is Thiamine-monophosphate kinase from Corynebacterium glutamicum (strain ATCC 13032 / DSM 20300 / JCM 1318 / BCRC 11384 / CCUG 27702 / LMG 3730 / NBRC 12168 / NCIMB 10025 / NRRL B-2784 / 534).